Here is a 253-residue protein sequence, read N- to C-terminus: Testis-expressed protein 101 (253 aa).

The N-terminal stretch at 1 to 24 (MAACWVHYLLLLLLGVSHQTLAQS) is a signal peptide. Residues asparagine 44, asparagine 112, asparagine 117, asparagine 121, and asparagine 162 are each glycosylated (N-linked (GlcNAc...) asparagine). Residues 53–117 (ETCNPGELCQ…SNYCNSSLCN (65 aa)) form the UPAR/Ly6 1 domain. One can recognise a UPAR/Ly6 2 domain in the interval 143-218 (CPTCVALGSC…KETCSYHSLL (76 aa)). Serine 226 carries GPI-anchor amidated serine lipidation. Residues 227-253 (RASGRSTSLWVLELLLPAVLVALTHFP) constitute a propeptide, removed in mature form.

In terms of assembly, interacts with VAMP3. Interacts with LY6K. Interacts with DPEP3; co-localized on the cell surface of spermatocytes, spermatids, and testicular spermatozoa, co-localized only in cytoplasmic droplets of caput and corpus epididymal sperm. Interacts with ADAM5. Post-translationally, N-glycosylated; by high mannose and/or biantennary complex and/or certain types of hybrid oligosaccharides; possesses different oligosaccharides chains according to its subcellular localization in the testis. In terms of processing, sheds from membrane raft by ACE and released from the cell surface of epididymal sperm while it passes through the caput epididymis leading to disappearance of TEX101 on spermatozoa; is essential to produce fertile spermatozoa.

Its subcellular location is the cell membrane. The protein localises to the membrane raft. It localises to the cytoplasmic vesicle. The protein resides in the secretory vesicle. It is found in the acrosome. Its subcellular location is the secreted. Functionally, plays a role in fertilization by controlling binding of sperm to zona pellucida and migration of spermatozoa into the oviduct. May play a role in signal transduction and promote protein tyrosine phosphorylation. The chain is Testis-expressed protein 101 from Cricetulus griseus (Chinese hamster).